The chain runs to 1137 residues: Morphogenesis-related protein MSB1 (1137 aa).

Disordered stretches follow at residues 1–59 and 483–520; these read MNDM…NSMD and QLKK…LSQT. Polar residues predominate over residues 21–50; sequence SNSPKKAQKTNLSPNKNQNNEKNVPRSNGR. The residue at position 538 (S538) is a Phosphoserine. Disordered regions lie at residues 577-620, 736-799, and 814-871; these read LNNL…EERV, STNT…SDSK, and AVSP…PQFS. A compositionally biased stretch (basic and acidic residues) spans 593–608; the sequence is FEEKSKDAPIREEYHT. The span at 736-749 shows a compositional bias: polar residues; the sequence is STNTNDSCADSSKY. The segment covering 750–769 has biased composition (basic and acidic residues); it reads TADRKLAEPRKISEESKVND. The span at 770–796 shows a compositional bias: polar residues; sequence DSSSYYSPNINNLPASRMPSQPTYSNS. S776 and S816 each carry phosphoserine.

In terms of biological role, may play a role in polarity establishment and bud formation. The MSB1 gene may be functionally redundant. The polypeptide is Morphogenesis-related protein MSB1 (MSB1) (Saccharomyces cerevisiae (strain ATCC 204508 / S288c) (Baker's yeast)).